The sequence spans 306 residues: Serine/threonine-protein phosphatase PP-X homolog 4 (306 aa).

The Mn(2+) site is built by Asp53, His55, Asp81, and Asn113. The active-site Proton donor is His114. Residues His163 and His237 each contribute to the Mn(2+) site.

It belongs to the PPP phosphatase family. PP-4 (PP-X) subfamily. Requires Mn(2+) as cofactor.

It catalyses the reaction O-phospho-L-seryl-[protein] + H2O = L-seryl-[protein] + phosphate. It carries out the reaction O-phospho-L-threonyl-[protein] + H2O = L-threonyl-[protein] + phosphate. This is Serine/threonine-protein phosphatase PP-X homolog 4 (Ppx4) from Paramecium tetraurelia.